A 46-amino-acid chain; its full sequence is MESSSPAMSVAIAVLAALLGLTGFGVYTAFGPPSKNLDDPFDDHED.

A helical membrane pass occupies residues 10–30 (VAIAVLAALLGLTGFGVYTAF).

This sequence belongs to the PsbN family.

It is found in the cellular thylakoid membrane. Functionally, may play a role in photosystem I and II biogenesis. The sequence is that of Protein PsbN from Synechococcus sp. (strain CC9311).